We begin with the raw amino-acid sequence, 2283 residues long: AT-rich interactive domain-containing protein 1A (2283 aa).

The segment covering 1–10 (MAAQVAPAAA) has biased composition (low complexity). 3 disordered regions span residues 1-333 (MAAQ…PADM), 346-822 (AAAA…LPNA), and 979-1006 (ATKM…TTTN). Ala-2 is subject to N-acetylalanine. Positions 22-34 (ELKKAEQQQREEA) are enriched in basic and acidic residues. 2 positions are modified to phosphoserine: Ser-56 and Ser-77. Over residues 77 to 93 (SNGGGGGGGAGSGGGPG) the composition is skewed to gly residues. 2 stretches are compositionally biased toward low complexity: residues 128-143 (SSSD…AAAA) and 233-266 (SSPR…SSSS). Residue Ser-234 is modified to Phosphoserine. Positions 274–287 (AMGGGGPSAAGGGT) are enriched in gly residues. The residue at position 287 (Thr-287) is a Phosphothreonine. An LXXLL motif is present at residues 296–300 (LNQLL). A compositionally biased stretch (polar residues) spans 296–307 (LNQLLTSPSSAR). At Ser-302 the chain carries Phosphoserine. Positions 311-328 (GYPGGDYGGGPQDGGAGK) are enriched in gly residues. 2 positions are modified to phosphoserine: Ser-365 and Ser-384. Over residues 402–427 (PYSQQQGPPSGPQQGHGYPGQPYGSQ) the composition is skewed to low complexity. An Asymmetric dimethylarginine modification is found at Arg-431. 2 stretches are compositionally biased toward polar residues: residues 438-451 (GRAQ…SYAQ) and 459-470 (QGPSAYGQQGQT). Low complexity-rich tracts occupy residues 471 to 547 (PYYN…QHPQ) and 554 to 596 (QPQA…YSQQ). Residue Ser-605 is modified to Phosphoserine. Low complexity predominate over residues 611–622 (SQASSAPSMTSS). The segment covering 629-638 (MNLSLQSRPS) has biased composition (polar residues). Positions 659 to 675 (SPGVSTSGISSSQGEQS) are enriched in low complexity. Residues 676–686 (NPAQSPFSPHT) are compositionally biased toward polar residues. Phosphoserine occurs at positions 697, 699, 703, 731, 765, and 773. Polar residues-rich tracts occupy residues 731–748 (SGQS…SSIA) and 756–794 (RNPQ…QNSM). The span at 795–822 (GSYGPQGSQYGPQGGYPRQPNYNALPNA) shows a compositional bias: low complexity. The region spanning 1018-1109 (EPERKMWVDR…CLYAFECKIE (92 aa)) is the ARID domain. Disordered regions lie at residues 1114-1484 (PPPD…MMGG) and 1539-1636 (RANH…PPMI). Residues 1142-1155 (MQGPQTPQSTSSSM) show a composition bias toward low complexity. Residues 1163–1178 (PPTPASTPHSQIPPLP) are compositionally biased toward pro residues. Ser-1185 carries the phosphoserine modification. Polar residues predominate over residues 1198 to 1220 (PTFQKRNSMTPNPGYQPSMNTSD). At Ser-1236 the chain carries Phosphoserine. An Omega-N-methylarginine modification is found at Arg-1277. Over residues 1343 to 1368 (QFSTQGTPSSSPFPSQQTTMYQQQQQ) the composition is skewed to low complexity. A Nuclear localization signal motif is present at residues 1369–1388 (NYKRPMDGTYGPPAKRHEGE). The span at 1395-1426 (SAGQGQPQQQQLPAAQSQPASQPQAAQPSPQQ) shows a compositional bias: low complexity. Composition is skewed to polar residues over residues 1427 to 1436 (DVYNQYSNAY) and 1469 to 1478 (PGSSAQQNMP). Pro residues predominate over residues 1555–1579 (PYGPSAPVPPMTRPPPSNYQPPPSM). At Ser-1605 the chain carries Phosphoserine. Position 1613 is an N6-acetyllysine (Lys-1613). An LXXLL motif is present at residues 1710-1714 (LPGLL). Disordered regions lie at residues 1757–1782 (PAHT…GVGN), 1872–1904 (CPTP…PEKR), and 1917–1941 (SSTL…PFGI). The span at 1761 to 1782 (EEEEEEHLDPKLEEEEEEGVGN) shows a compositional bias: acidic residues. Residues Thr-1874 and Thr-1886 each carry the phosphothreonine modification. A compositionally biased stretch (low complexity) spans 1882-1893 (TVEGTPGTTEQE). Lys-1903 carries the post-translational modification N6-acetyllysine. Positions 1923-1935 (EGAKSAEATKESS) are enriched in basic and acidic residues. Ser-1927 and Ser-1942 each carry phosphoserine. 2 short sequence motifs (LXXLL) span residues 1965 to 1969 (LCTLL) and 2083 to 2087 (LDGLL).

As to quaternary structure, component of SWI/SNF chromatin remodeling complexes, in some of which it can be mutually exclusive with ARID1B/BAF250B. The canonical complex contains a catalytic subunit (either SMARCA4/BRG1/BAF190A or SMARCA2/BRM/BAF190B) and at least SMARCE1, ACTL6A/BAF53, SMARCC1/BAF155, SMARCC2/BAF170, and SMARCB1/SNF5/BAF47. Other subunits specific to each of the complexes may also be present permitting several possible combinations developmentally and tissue specific. Component of the BAF (SWI/SNF-A) complex, which includes at least actin (ACTB), ARID1A/BAF250A, ARID1B/BAF250B, SMARCA2/BRM, SMARCA4/BRG1/BAF190A, ACTL6A/BAF53, ACTL6B/BAF53B, SMARCE1/BAF57, SMARCC1/BAF155, SMARCC2/BAF170, SMARCB1/SNF5/INI1, and one or more SMARCD1/BAF60A, SMARCD2/BAF60B, or SMARCD3/BAF60C. In muscle cells, the BAF complex also contains DPF3. Component of neural progenitors-specific chromatin remodeling complex (npBAF complex) composed of at least, ARID1A/BAF250A or ARID1B/BAF250B, SMARCD1/BAF60A, SMARCD3/BAF60C, SMARCA2/BRM/BAF190B, SMARCA4/BRG1/BAF190A, SMARCB1/BAF47, SMARCC1/BAF155, SMARCE1/BAF57, SMARCC2/BAF170, PHF10/BAF45A, ACTL6A/BAF53A and actin. Component of neuron-specific chromatin remodeling complex (nBAF complex) composed of at least, ARID1A/BAF250A or ARID1B/BAF250B, SMARCD1/BAF60A, SMARCD3/BAF60C, SMARCA2/BRM/BAF190B, SMARCA4/BRG1/BAF190A, SMARCB1/BAF47, SMARCC1/BAF155, SMARCE1/BAF57, SMARCC2/BAF170, DPF1/BAF45B, DPF3/BAF45C, ACTL6B/BAF53B and actin. Component of a SWI/SNF-like EBAFa complex, at least composed of SMARCA4/BRG1/BAF190A, SMARCB1/BAF47/SNF5, ACTL6A/BAF53A, SMARCE1/BAF57, SMARCD1/BAF60A, SMARCC1/BAF155, SMARCC2/BAF170, BAF250A and MLLT1/ENL. Interacts through its C-terminus with SMARCA2/BRM/BAF190B and SMARCA4/BRG1/BAF190A. Interacts with SMARCC1/BAF155. Interacts with FOS (via bZIP domain and leucine-zipper region), FOSB isoform 1 and 2, FOSL1 and FOSL2. In terms of tissue distribution, widely expressed. Expressed at high levels in the testis.

Its subcellular location is the nucleus. Its function is as follows. Involved in transcriptional activation and repression of select genes by chromatin remodeling (alteration of DNA-nucleosome topology). Component of SWI/SNF chromatin remodeling complexes that carry out key enzymatic activities, changing chromatin structure by altering DNA-histone contacts within a nucleosome in an ATP-dependent manner. Binds DNA non-specifically. Belongs to the neural progenitors-specific chromatin remodeling complex (npBAF complex) and the neuron-specific chromatin remodeling complex (nBAF complex). During neural development a switch from a stem/progenitor to a postmitotic chromatin remodeling mechanism occurs as neurons exit the cell cycle and become committed to their adult state. The transition from proliferating neural stem/progenitor cells to postmitotic neurons requires a switch in subunit composition of the npBAF and nBAF complexes. As neural progenitors exit mitosis and differentiate into neurons, npBAF complexes which contain ACTL6A/BAF53A and PHF10/BAF45A, are exchanged for homologous alternative ACTL6B/BAF53B and DPF1/BAF45B or DPF3/BAF45C subunits in neuron-specific complexes (nBAF). The npBAF complex is essential for the self-renewal/proliferative capacity of the multipotent neural stem cells. The nBAF complex along with CREST plays a role regulating the activity of genes essential for dendrite growth. The sequence is that of AT-rich interactive domain-containing protein 1A (Arid1a) from Mus musculus (Mouse).